An 899-amino-acid chain; its full sequence is Tubulin glycylase 3F (899 aa).

A TTL domain is found at 471–835; it reads FKDVIQIIKN…TEYYQIQNWK (365 aa). ATP contacts are provided by residues 642-645, Lys-663, and Asp-665; that span reads QKYI.

The protein resides in the cytoplasm. The protein localises to the cytoskeleton. Its subcellular location is the cilium basal body. Probable glycylase which modifies tubulin, generating side chains of glycine on the gamma-carboxyl groups of specific glutamate residues within the C-terminal tail of tubulin. The protein is Tubulin glycylase 3F (TTLL3F) of Tetrahymena thermophila (strain SB210).